Here is a 98-residue protein sequence, read N- to C-terminus: Co-chaperonin GroES (98 aa).

Residues 35-57 (EKPQEGKVISAGPGRVDDKGTRV) are disordered.

This sequence belongs to the GroES chaperonin family. As to quaternary structure, heptamer of 7 subunits arranged in a ring. Interacts with the chaperonin GroEL.

The protein localises to the cytoplasm. Its function is as follows. Together with the chaperonin GroEL, plays an essential role in assisting protein folding. The GroEL-GroES system forms a nano-cage that allows encapsulation of the non-native substrate proteins and provides a physical environment optimized to promote and accelerate protein folding. GroES binds to the apical surface of the GroEL ring, thereby capping the opening of the GroEL channel. In Cutibacterium acnes (strain DSM 16379 / KPA171202) (Propionibacterium acnes), this protein is Co-chaperonin GroES.